We begin with the raw amino-acid sequence, 293 residues long: Elongation factor Ts (293 aa).

The interval 80 to 83 (TDFV) is involved in Mg(2+) ion dislocation from EF-Tu.

Belongs to the EF-Ts family.

It localises to the cytoplasm. Functionally, associates with the EF-Tu.GDP complex and induces the exchange of GDP to GTP. It remains bound to the aminoacyl-tRNA.EF-Tu.GTP complex up to the GTP hydrolysis stage on the ribosome. The polypeptide is Elongation factor Ts (Burkholderia multivorans (strain ATCC 17616 / 249)).